Here is a 270-residue protein sequence, read N- to C-terminus: Glutamate racemase (270 aa).

Substrate is bound by residues 10–11 (DS) and 42–43 (YG). C74 serves as the catalytic Proton donor/acceptor. Position 75–76 (75–76 (NT)) interacts with substrate. The active-site Proton donor/acceptor is the C189. Position 190 to 191 (190 to 191 (TH)) interacts with substrate.

The protein belongs to the aspartate/glutamate racemases family.

The catalysed reaction is L-glutamate = D-glutamate. The protein operates within cell wall biogenesis; peptidoglycan biosynthesis. Provides the (R)-glutamate required for cell wall biosynthesis. This Bartonella quintana (strain Toulouse) (Rochalimaea quintana) protein is Glutamate racemase.